A 224-amino-acid chain; its full sequence is ATP synthase subunit a (224 aa).

6 helical membrane-spanning segments follow: residues 17–37, 78–98, 104–124, 136–156, 176–196, and 201–221; these read FIYM…VKMA, LVAT…VPGF, FLEF…YEGI, FLGP…VSHF, FLMV…YALL, and FLQA…AIAV.

Belongs to the ATPase A chain family. As to quaternary structure, F-type ATPases have 2 components, CF(1) - the catalytic core - and CF(0) - the membrane proton channel. CF(1) has five subunits: alpha(3), beta(3), gamma(1), delta(1), epsilon(1). CF(0) has three main subunits: a(1), b(2) and c(9-12). The alpha and beta chains form an alternating ring which encloses part of the gamma chain. CF(1) is attached to CF(0) by a central stalk formed by the gamma and epsilon chains, while a peripheral stalk is formed by the delta and b chains.

Its subcellular location is the cell inner membrane. Key component of the proton channel; it plays a direct role in the translocation of protons across the membrane. The protein is ATP synthase subunit a of Sulfurimonas denitrificans (strain ATCC 33889 / DSM 1251) (Thiomicrospira denitrificans (strain ATCC 33889 / DSM 1251)).